The primary structure comprises 495 residues: Potassium voltage-gated channel subfamily A member 1 (495 aa).

Residues 1–30 (MTVMSGENADEASTAPGHPQDGSYPRQADH) are disordered. The interval 1 to 128 (MTVMSGENAD…FYELGEEAME (128 aa)) is tetramerization domain. Topologically, residues 1 to 164 (MTVMSGENAD…LLFEYPESSG (164 aa)) are cytoplasmic. Residue serine 23 is modified to Phosphoserine. Residues 165–186 (PARVIAIVSVMVILISIVIFCL) form a helical membrane-spanning segment. At 187 to 220 (ETLPELKDDKDFTGTIHRIDNTTVIYTSNIFTDP) the chain is on the extracellular side. Asparagine 207 carries N-linked (GlcNAc...) asparagine glycosylation. Residues 221 to 242 (FFIVETLCIIWFSFELVVRFFA) form a helical membrane-spanning segment. Cysteine 243 carries the S-palmitoyl cysteine lipid modification. The Cytoplasmic portion of the chain corresponds to 243 to 253 (CPSKTDFFKNI). The helical transmembrane segment at 254 to 274 (MNFIDIVAIIPYFITLGTEIA) threads the bilayer. The Extracellular segment spans residues 275–287 (EQEGNQKGEQATS). Residues 288–308 (LAILRVIRLVRVFRIFKLSRH) traverse the membrane as a helical; Voltage-sensor segment. At 309 to 323 (SKGLQILGQTLKASM) the chain is on the cytoplasmic side. Residues 310-323 (KGLQILGQTLKASM) are S4-S5 linker. A Phosphoserine; by PKA modification is found at serine 322. A helical transmembrane segment spans residues 324 to 345 (RELGLLIFFLFIGVILFSSAVY). The Extracellular segment spans residues 346–359 (FAEAEEAESHFSSI). The helical intramembrane region spans 360–371 (PDAFWWAVVSMT). The Selectivity filter motif lies at 372-377 (TVGYGD). The stretch at 372–379 (TVGYGDMY) is an intramembrane region. Over 380 to 386 (PVTIGGK) the chain is Extracellular. The helical transmembrane segment at 387–415 (IVGSLCAIAGVLTIALPVPVIVSNFNYFY) threads the bilayer. The Cytoplasmic segment spans residues 416-495 (HRETEGEEQA…VNKSKLLTDV (80 aa)). Residues serine 437 and serine 439 each carry the phosphoserine modification. At serine 446 the chain carries Phosphoserine; by PKA. Positions 493 to 495 (TDV) match the PDZ-binding motif.

Belongs to the potassium channel family. A (Shaker) (TC 1.A.1.2) subfamily. Kv1.1/KCNA1 sub-subfamily. Homotetramer and heterotetramer with other channel-forming alpha subunits, such as KCNA2, KCNA4, KCNA5, KCNA6 and KCNA7. Channel activity is regulated by interaction with the beta subunits KCNAB1 and KCNAB2. Identified in a complex with KCNA2 and KCNAB2. Interacts (via C-terminus) with the PDZ domains of DLG1, DLG2 and DLG4. Interacts with LGI1 within a complex containing LGI1, KCNA4 and KCNAB1. Interacts (via N-terminus) with STX1A; this promotes channel inactivation. Interacts (via N-terminus) with the heterodimer formed by GNB1 and GNG2; this promotes channel inactivation. Can interact simultaneously with STX1A and the heterodimer formed by GNB1 and GNG2. Interacts (via cytoplasmic N-terminal domain) with KCNRG; this inhibits channel activity. Interacts with ANK3; this inhibits channel activity. Interacts with ADAM11. N-glycosylated. Post-translationally, palmitoylated on Cys-243; which may be required for membrane targeting. In terms of processing, phosphorylated on tyrosine residues. Phosphorylation increases in response to NRG1; this inhibits channel activity. Phosphorylation at Ser-446 regulates channel activity by down-regulating expression at the cell membrane. In terms of tissue distribution, detected in brain. Expressed in cerebellar cortex basket cell terminals, the area surround the Purkinje cell soma, and the pinceaux expansions encircling the axon initial segment (at protein level). Detected in the juxtaparanodal regions of the nodes of Ranvier in myelinated axons. Detected in the paranodal region in sciatic nerve. Detected on cell bodies in cerebellum, dorsal and ventral cochlear nucleus, pontine reticular nucleus, mesencephalic trigeminal nucleus, motor trigeminal nucleus and the pricipal sensory trigeminal nucleus. Detected in terminal fields of basket cells in the cerebellum corpus medullare. Detected in hippocampus CA3 pyramidal neurons and in the hilus and stratum moleculare of the dentate gyrus. Detected in the central nucleus and the external nucleus of the inferior colliculus. Detected in fiber tracts in the optic tract, external medullary lamina, stria terminalis, medulla, ventral pallidum and substantia nigra. Detected in neurons from dorsal root ganglion. Detected in neurons in the medial nucleus of the trapezoid body. Detected in midbrain dopamine neuron axon terminals. Detected in brain cortex. Detected in brainstem. Detected in juxtaparanodal regions of the nodes of Ranvier in the vagus nerve, but only at very low levels in the heart. Detected in the islet of Langerhans. Detected at the luminal membrane in distal convoluted tubules in the kidney (at protein level). Detected in hippocampus, thalamus, neocortex and ventral brain cortex, including the piriform and entorhinal cortex and the amygdala. Detected in midbrain dopamine neurons. Detected in heart atrium, ventricle, sinoatrial node and atrioventricular node.

The protein localises to the cell membrane. Its subcellular location is the cell projection. It localises to the axon. The protein resides in the membrane. It is found in the perikaryon. The protein localises to the dendrite. Its subcellular location is the cell junction. It localises to the synapse. The protein resides in the cytoplasmic vesicle. It is found in the endoplasmic reticulum. The protein localises to the presynaptic cell membrane. Its subcellular location is the presynapse. It catalyses the reaction K(+)(in) = K(+)(out). With respect to regulation, inhibited by 4-aminopyridine (4-AP), tetraethylammonium (TEA) and dendrotoxin (DTX), but not by charybdotoxin (CTX). Functionally, voltage-gated potassium channel that mediates transmembrane potassium transport in excitable membranes, primarily in the brain and the central nervous system, but also in the kidney. Contributes to the regulation of the membrane potential and nerve signaling, and prevents neuronal hyperexcitability. Forms tetrameric potassium-selective channels through which potassium ions pass in accordance with their electrochemical gradient. The channel alternates between opened and closed conformations in response to the voltage difference across the membrane. Can form functional homotetrameric channels and heterotetrameric channels that contain variable proportions of KCNA1, KCNA2, KCNA4, KCNA5, KCNA6, KCNA7, and possibly other family members as well; channel properties depend on the type of alpha subunits that are part of the channel. Channel properties are modulated by cytoplasmic beta subunits that regulate the subcellular location of the alpha subunits and promote rapid inactivation of delayed rectifier potassium channels. In vivo, membranes probably contain a mixture of heteromeric potassium channel complexes, making it difficult to assign currents observed in intact tissues to any particular potassium channel family member. Homotetrameric KCNA1 forms a delayed-rectifier potassium channel that opens in response to membrane depolarization, followed by slow spontaneous channel closure. In contrast, a heterotetrameric channel formed by KCNA1 and KCNA4 shows rapid inactivation. Regulates neuronal excitability in hippocampus, especially in mossy fibers and medial perforant path axons, preventing neuronal hyperexcitability. May function as down-stream effector for G protein-coupled receptors and inhibit GABAergic inputs to basolateral amygdala neurons. May contribute to the regulation of neurotransmitter release, such as gamma-aminobutyric acid (GABA) release. Plays a role in regulating the generation of action potentials and preventing hyperexcitability in myelinated axons of the vagus nerve, and thereby contributes to the regulation of heart contraction. Required for normal neuromuscular responses. Regulates the frequency of neuronal action potential firing in response to mechanical stimuli, and plays a role in the perception of pain caused by mechanical stimuli, but does not play a role in the perception of pain due to heat stimuli. Required for normal responses to auditory stimuli and precise location of sound sources, but not for sound perception. The use of toxins that block specific channels suggest that it contributes to the regulation of the axonal release of the neurotransmitter dopamine. Required for normal postnatal brain development and normal proliferation of neuronal precursor cells in the brain. Plays a role in the reabsorption of Mg(2+) in the distal convoluted tubules in the kidney and in magnesium ion homeostasis, probably via its effect on the membrane potential. This chain is Potassium voltage-gated channel subfamily A member 1, found in Mus musculus (Mouse).